A 318-amino-acid polypeptide reads, in one-letter code: Mediator of RNA polymerase II transcription subunit 3 (318 aa).

Residues 134-156 (SAAGITKTSSGNDGNTTGSTANT) are compositionally biased toward polar residues. The tract at residues 134 to 225 (SAAGITKTSS…PSLKQIPNTQ (92 aa)) is disordered. Residues 192–217 (HTGPATAPTTSNSAASAAAAAANTPS) show a composition bias toward low complexity.

The protein belongs to the Mediator complex subunit 3 family. In terms of assembly, component of the Mediator complex.

It localises to the nucleus. Component of the Mediator complex, a coactivator involved in regulated gene transcription of nearly all RNA polymerase II-dependent genes. Mediator functions as a bridge to convey information from gene-specific regulatory proteins to the basal RNA polymerase II transcription machinery. Mediator is recruited to promoters by direct interactions with regulatory proteins and serves as a scaffold for the assembly of a functional preinitiation complex with RNA polymerase II and the general transcription factors. This Kluyveromyces lactis (strain ATCC 8585 / CBS 2359 / DSM 70799 / NBRC 1267 / NRRL Y-1140 / WM37) (Yeast) protein is Mediator of RNA polymerase II transcription subunit 3 (PGD1).